Consider the following 188-residue polypeptide: dCTP deaminase (188 aa).

DCTP contacts are provided by residues 111–116 (KSTYAR), 135–137 (TLE), Gln-156, Tyr-170, Lys-179, and Gln-180. The Proton donor/acceptor role is filled by Glu-137.

Belongs to the dCTP deaminase family. In terms of assembly, homotrimer.

The catalysed reaction is dCTP + H2O + H(+) = dUTP + NH4(+). The protein operates within pyrimidine metabolism; dUMP biosynthesis; dUMP from dCTP (dUTP route): step 1/2. Its function is as follows. Catalyzes the deamination of dCTP to dUTP. The polypeptide is dCTP deaminase (Rickettsia felis (strain ATCC VR-1525 / URRWXCal2) (Rickettsia azadi)).